The chain runs to 218 residues: Ribose-5-phosphate isomerase A (218 aa).

Substrate contacts are provided by residues 28-31, 81-84, and 94-97; these read TGST, DGAD, and KGGG. Glutamate 103 serves as the catalytic Proton acceptor. Lysine 121 is a binding site for substrate.

It belongs to the ribose 5-phosphate isomerase family. As to quaternary structure, homodimer.

The catalysed reaction is aldehydo-D-ribose 5-phosphate = D-ribulose 5-phosphate. It functions in the pathway carbohydrate degradation; pentose phosphate pathway; D-ribose 5-phosphate from D-ribulose 5-phosphate (non-oxidative stage): step 1/1. Catalyzes the reversible conversion of ribose-5-phosphate to ribulose 5-phosphate. The sequence is that of Ribose-5-phosphate isomerase A from Vibrio atlanticus (strain LGP32) (Vibrio splendidus (strain Mel32)).